Reading from the N-terminus, the 40-residue chain is Photosystem II reaction center protein J (40 aa).

A helical membrane pass occupies residues 8-28; it reads IPLWLVGTVTGIPVIGLIGVF.

This sequence belongs to the PsbJ family. As to quaternary structure, PSII is composed of 1 copy each of membrane proteins PsbA, PsbB, PsbC, PsbD, PsbE, PsbF, PsbH, PsbI, PsbJ, PsbK, PsbL, PsbM, PsbT, PsbX, PsbY, PsbZ, Psb30/Ycf12, at least 3 peripheral proteins of the oxygen-evolving complex and a large number of cofactors. It forms dimeric complexes.

It localises to the plastid. Its subcellular location is the chloroplast thylakoid membrane. One of the components of the core complex of photosystem II (PSII). PSII is a light-driven water:plastoquinone oxidoreductase that uses light energy to abstract electrons from H(2)O, generating O(2) and a proton gradient subsequently used for ATP formation. It consists of a core antenna complex that captures photons, and an electron transfer chain that converts photonic excitation into a charge separation. This Musa acuminata (Banana) protein is Photosystem II reaction center protein J.